The primary structure comprises 212 residues: Ribosomal RNA small subunit methyltransferase G (212 aa).

S-adenosyl-L-methionine contacts are provided by residues Gly-73, 127–128 (IE), and Arg-143.

It belongs to the methyltransferase superfamily. RNA methyltransferase RsmG family.

The protein resides in the cytoplasm. The catalysed reaction is guanosine(527) in 16S rRNA + S-adenosyl-L-methionine = N(7)-methylguanosine(527) in 16S rRNA + S-adenosyl-L-homocysteine. Its function is as follows. Specifically methylates the N7 position of guanine in position 527 of 16S rRNA. This Methylobacterium sp. (strain 4-46) protein is Ribosomal RNA small subunit methyltransferase G.